The following is a 154-amino-acid chain: Transcriptional repressor NrdR (154 aa).

A zinc finger spans residues 3-34 (CPTCQYNGTRVVDSRPADDGNSIRRRRECEKC). Residues 49–139 (LIVVKKDGAR…VYRQFKDISV (91 aa)) enclose the ATP-cone domain.

The protein belongs to the NrdR family. Requires Zn(2+) as cofactor.

Its function is as follows. Negatively regulates transcription of bacterial ribonucleotide reductase nrd genes and operons by binding to NrdR-boxes. This chain is Transcriptional repressor NrdR, found in Listeria monocytogenes serotype 4a (strain HCC23).